We begin with the raw amino-acid sequence, 141 residues long: Nucleoside diphosphate kinase (141 aa).

Residues Lys-11, Phe-59, Arg-87, Thr-93, Arg-104, and Asn-114 each contribute to the ATP site. His-117 serves as the catalytic Pros-phosphohistidine intermediate.

It belongs to the NDK family. Homotetramer. Requires Mg(2+) as cofactor.

It localises to the cytoplasm. The enzyme catalyses a 2'-deoxyribonucleoside 5'-diphosphate + ATP = a 2'-deoxyribonucleoside 5'-triphosphate + ADP. The catalysed reaction is a ribonucleoside 5'-diphosphate + ATP = a ribonucleoside 5'-triphosphate + ADP. In terms of biological role, major role in the synthesis of nucleoside triphosphates other than ATP. The ATP gamma phosphate is transferred to the NDP beta phosphate via a ping-pong mechanism, using a phosphorylated active-site intermediate. The sequence is that of Nucleoside diphosphate kinase from Pseudomonas putida (strain W619).